Consider the following 287-residue polypeptide: ATP synthase gamma chain (287 aa).

It belongs to the ATPase gamma chain family. F-type ATPases have 2 components, CF(1) - the catalytic core - and CF(0) - the membrane proton channel. CF(1) has five subunits: alpha(3), beta(3), gamma(1), delta(1), epsilon(1). CF(0) has three main subunits: a, b and c.

Its subcellular location is the cell inner membrane. Its function is as follows. Produces ATP from ADP in the presence of a proton gradient across the membrane. The gamma chain is believed to be important in regulating ATPase activity and the flow of protons through the CF(0) complex. In Cronobacter sakazakii (strain ATCC BAA-894) (Enterobacter sakazakii), this protein is ATP synthase gamma chain.